The following is a 638-amino-acid chain: Phosphomethylpyrimidine synthase (638 aa).

Substrate is bound by residues Asn243, Met272, Tyr301, His337, 357–359 (SRG), 398–401 (DGLR), and Glu437. His441 contributes to the Zn(2+) binding site. Position 464 (Tyr464) interacts with substrate. His505 provides a ligand contact to Zn(2+). [4Fe-4S] cluster contacts are provided by Cys585, Cys588, and Cys593.

It belongs to the ThiC family. In terms of assembly, homodimer. [4Fe-4S] cluster is required as a cofactor.

It catalyses the reaction 5-amino-1-(5-phospho-beta-D-ribosyl)imidazole + S-adenosyl-L-methionine = 4-amino-2-methyl-5-(phosphooxymethyl)pyrimidine + CO + 5'-deoxyadenosine + formate + L-methionine + 3 H(+). The protein operates within cofactor biosynthesis; thiamine diphosphate biosynthesis. Catalyzes the synthesis of the hydroxymethylpyrimidine phosphate (HMP-P) moiety of thiamine from aminoimidazole ribotide (AIR) in a radical S-adenosyl-L-methionine (SAM)-dependent reaction. The sequence is that of Phosphomethylpyrimidine synthase from Aromatoleum aromaticum (strain DSM 19018 / LMG 30748 / EbN1) (Azoarcus sp. (strain EbN1)).